Here is a 251-residue protein sequence, read N- to C-terminus: MSLLLENLIEEDTIFFAGSISEYDDLQMVIAGAKSKFPRSMLSIFNIVPRTMSKYELELIHNENITGAMFTTMYNIRNNLGLGDDKLTIEAIENYFLDPNNEVMPLIINNTDMTAVIPKKSGRRKNKNMVIFRQGSSPILCIFETRKKINIYKENMESASTEYTPIGDNKALISKYAGINVLNVYSPSTSMRLNAIYGFTNKNKLEKLSTNKELELYSSSPLQEPIRLNDFLGLLECVKKNIPLTDIPTKD.

Positions 1–32 are cleaved as a propeptide — removed by core protease OPG083; sequence MSLLLENLIEEDTIFFAGSISEYDDLQMVIAG.

It belongs to the orthopoxvirus OPG098 family. Undergoes morphogenesis-associated proteolysis which cleaves the 28 kDa to a 25-kDa product. Proteolytic cleavage of major core proteins P4a (OPG136), P4b (OPG129), and VP8 (OPG098), which occurs at a late stage of core formation, is required for production of infectious mature virions (MV).

It localises to the virion. Its subcellular location is the host cytoplasm. Major core structural protein. This is Core protein VP8 (OPG098) from Homo sapiens (Human).